The following is a 532-amino-acid chain: Protein kinase domain-containing protein ppk9 (532 aa).

Positions 23–274 (WLLGRTLGQG…VAEIMQHPWF (252 aa)) constitute a Protein kinase domain. Residues 29-37 (LGQGNLAKV) and K52 each bind ATP. The active-site Proton acceptor is the D145. Over residues 316–346 (PSSSVGQIPQPTDHSALSPSKPMSISGTESP) the composition is skewed to polar residues. The tract at residues 316-349 (PSSSVGQIPQPTDHSALSPSKPMSISGTESPNPD) is disordered.

Its subcellular location is the cytoplasm. It localises to the nucleus. The protein localises to the cytoskeleton. It is found in the microtubule organizing center. The protein resides in the spindle pole body. The sequence is that of Protein kinase domain-containing protein ppk9 (ppk9) from Schizosaccharomyces pombe (strain 972 / ATCC 24843) (Fission yeast).